The primary structure comprises 133 residues: S-adenosylmethionine decarboxylase proenzyme (133 aa).

The active-site Schiff-base intermediate with substrate; via pyruvic acid is the Ser64. Ser64 bears the Pyruvic acid (Ser); by autocatalysis mark. His69 acts as the Proton acceptor; for processing activity in catalysis. Cys84 functions as the Proton donor; for catalytic activity in the catalytic mechanism.

This sequence belongs to the prokaryotic AdoMetDC family. Type 1 subfamily. As to quaternary structure, heterotetramer of two alpha and two beta chains arranged as a dimer of alpha/beta heterodimers. Pyruvate serves as cofactor. In terms of processing, is synthesized initially as an inactive proenzyme. Formation of the active enzyme involves a self-maturation process in which the active site pyruvoyl group is generated from an internal serine residue via an autocatalytic post-translational modification. Two non-identical subunits are generated from the proenzyme in this reaction, and the pyruvate is formed at the N-terminus of the alpha chain, which is derived from the carboxyl end of the proenzyme. The post-translation cleavage follows an unusual pathway, termed non-hydrolytic serinolysis, in which the side chain hydroxyl group of the serine supplies its oxygen atom to form the C-terminus of the beta chain, while the remainder of the serine residue undergoes an oxidative deamination to produce ammonia and the pyruvoyl group blocking the N-terminus of the alpha chain.

It carries out the reaction S-adenosyl-L-methionine + H(+) = S-adenosyl 3-(methylsulfanyl)propylamine + CO2. The protein operates within amine and polyamine biosynthesis; S-adenosylmethioninamine biosynthesis; S-adenosylmethioninamine from S-adenosyl-L-methionine: step 1/1. Its function is as follows. Catalyzes the decarboxylation of S-adenosylmethionine to S-adenosylmethioninamine (dcAdoMet), the propylamine donor required for the synthesis of the polyamines spermine and spermidine from the diamine putrescine. This Sulfurihydrogenibium sp. (strain YO3AOP1) protein is S-adenosylmethionine decarboxylase proenzyme.